The sequence spans 120 residues: Putative pterin-4-alpha-carbinolamine dehydratase (120 aa).

It belongs to the pterin-4-alpha-carbinolamine dehydratase family.

The enzyme catalyses (4aS,6R)-4a-hydroxy-L-erythro-5,6,7,8-tetrahydrobiopterin = (6R)-L-erythro-6,7-dihydrobiopterin + H2O. The polypeptide is Putative pterin-4-alpha-carbinolamine dehydratase (Saccharomyces cerevisiae (strain ATCC 204508 / S288c) (Baker's yeast)).